We begin with the raw amino-acid sequence, 181 residues long: Large ribosomal subunit protein uL6 (181 aa).

The protein belongs to the universal ribosomal protein uL6 family. In terms of assembly, part of the 50S ribosomal subunit.

Functionally, this protein binds to the 23S rRNA, and is important in its secondary structure. It is located near the subunit interface in the base of the L7/L12 stalk, and near the tRNA binding site of the peptidyltransferase center. This Synechococcus sp. (strain JA-3-3Ab) (Cyanobacteria bacterium Yellowstone A-Prime) protein is Large ribosomal subunit protein uL6.